Reading from the N-terminus, the 383-residue chain is 8-amino-7-oxononanoate synthase (383 aa).

Arg21 serves as a coordination point for substrate. A pyridoxal 5'-phosphate-binding site is contributed by 108-109 (GY). His133 is a substrate binding site. Ser179, His207, and Thr233 together coordinate pyridoxal 5'-phosphate. Lys236 is modified (N6-(pyridoxal phosphate)lysine). Thr350 lines the substrate pocket.

This sequence belongs to the class-II pyridoxal-phosphate-dependent aminotransferase family. BioF subfamily. Homodimer. Pyridoxal 5'-phosphate is required as a cofactor.

The catalysed reaction is 6-carboxyhexanoyl-[ACP] + L-alanine + H(+) = (8S)-8-amino-7-oxononanoate + holo-[ACP] + CO2. It functions in the pathway cofactor biosynthesis; biotin biosynthesis. Catalyzes the decarboxylative condensation of pimeloyl-[acyl-carrier protein] and L-alanine to produce 8-amino-7-oxononanoate (AON), [acyl-carrier protein], and carbon dioxide. The protein is 8-amino-7-oxononanoate synthase of Yersinia pseudotuberculosis serotype O:1b (strain IP 31758).